A 174-amino-acid chain; its full sequence is Cytochrome c-550-like protein (174 aa).

A signal peptide spans 1–37 (MPGQTQGAKRWRVPGRGWRWAGILLLVWLGLASPAAG). 4 residues coordinate heme c: Cys-82, Cys-85, His-86, and Cys-136.

It belongs to the cytochrome c family. PsbV subfamily. The cofactor is heme c.

The protein resides in the cellular thylakoid membrane. Its function is as follows. Possible low-potential cytochrome c. The sequence is that of Cytochrome c-550-like protein (psbV2) from Synechococcus sp. (strain JA-3-3Ab) (Cyanobacteria bacterium Yellowstone A-Prime).